The chain runs to 471 residues: 3-isopropylmalate dehydratase large subunit (471 aa).

Residues Cys347, Cys407, and Cys410 each contribute to the [4Fe-4S] cluster site.

The protein belongs to the aconitase/IPM isomerase family. LeuC type 1 subfamily. As to quaternary structure, heterodimer of LeuC and LeuD. Requires [4Fe-4S] cluster as cofactor.

It carries out the reaction (2R,3S)-3-isopropylmalate = (2S)-2-isopropylmalate. It functions in the pathway amino-acid biosynthesis; L-leucine biosynthesis; L-leucine from 3-methyl-2-oxobutanoate: step 2/4. Catalyzes the isomerization between 2-isopropylmalate and 3-isopropylmalate, via the formation of 2-isopropylmaleate. The chain is 3-isopropylmalate dehydratase large subunit from Anoxybacillus flavithermus (strain DSM 21510 / WK1).